Here is an 88-residue protein sequence, read N- to C-terminus: Sm-like protein LSM5 (88 aa).

Alanine 2 carries the N-acetylalanine modification. The 76-residue stretch at 9–84 (LPSELIDRCI…IAILVPGGSP (76 aa)) folds into the Sm domain.

The protein belongs to the snRNP Sm proteins family. As to quaternary structure, component of the heptameric LSM1-LSM7 complex that forms a seven-membered ring structure with a donut shape. The LSM subunits are arranged in the order LSM1, LSM2, LSM3, LSM6, LSM5, LSM7 and LSM4. Component of the heptameric LSM2-LSM8 complex that forms a seven-membered ring structure with a donut shape. The LSM subunits are arranged in the order LSM8, LSM2, LSM3, LSM6, LSM5, LSM7 and LSM4. LSM2 subunit interacts only with its two neighboring subunits, LSM6A or LSM6B and LSM7. In terms of tissue distribution, expressed in roots, leaves, stems, flowers and siliques.

Its subcellular location is the cytoplasm. The protein localises to the nucleus. Component of LSM protein complexes, which are involved in RNA processing. Component of the cytoplasmic LSM1-LSM7 complex which is involved in mRNA degradation by promoting decapping and leading to accurate 5'-3' mRNA decay. The cytoplasmic LSM1-LSM7 complex regulates developmental gene expression by the decapping of specific development-related transcripts. Component of the nuclear LSM2-LSM8 complex which is involved splicing nuclear mRNAs. LSM2-LSM8 binds directly to the U6 small nuclear RNAs (snRNAs) and is essential for accurate splicing of selected development-related mRNAs through the stabilization of the spliceosomal U6 snRNA. Plays a critical role in the regulation of development-related gene expression. Involved in the control of plant sensitivity to abscisic acid (ABA) and drought. Functions with ABH1 as negative regulator of ABA signaling in guard cells. Required for regulation of splicing efficiency of many stress-responsive genes under stress conditions. This Arabidopsis thaliana (Mouse-ear cress) protein is Sm-like protein LSM5.